The chain runs to 216 residues: Uracil-DNA glycosylase (216 aa).

The Proton acceptor role is filled by aspartate 60.

This sequence belongs to the uracil-DNA glycosylase (UDG) superfamily. UNG family.

The protein localises to the cytoplasm. It carries out the reaction Hydrolyzes single-stranded DNA or mismatched double-stranded DNA and polynucleotides, releasing free uracil.. Functionally, excises uracil residues from the DNA which can arise as a result of misincorporation of dUMP residues by DNA polymerase or due to deamination of cytosine. In Psychromonas ingrahamii (strain DSM 17664 / CCUG 51855 / 37), this protein is Uracil-DNA glycosylase.